A 422-amino-acid chain; its full sequence is UDP-N-acetylglucosamine 1-carboxyvinyltransferase (422 aa).

22–23 (KN) serves as a coordination point for phosphoenolpyruvate. R93 contacts UDP-N-acetyl-alpha-D-glucosamine. Residue C117 is the Proton donor of the active site. C117 bears the 2-(S-cysteinyl)pyruvic acid O-phosphothioketal mark. Residues 122–126 (RPVDL), D308, and L330 contribute to the UDP-N-acetyl-alpha-D-glucosamine site.

The protein belongs to the EPSP synthase family. MurA subfamily.

Its subcellular location is the cytoplasm. The catalysed reaction is phosphoenolpyruvate + UDP-N-acetyl-alpha-D-glucosamine = UDP-N-acetyl-3-O-(1-carboxyvinyl)-alpha-D-glucosamine + phosphate. It participates in cell wall biogenesis; peptidoglycan biosynthesis. Its function is as follows. Cell wall formation. Adds enolpyruvyl to UDP-N-acetylglucosamine. This chain is UDP-N-acetylglucosamine 1-carboxyvinyltransferase, found in Helicobacter acinonychis (strain Sheeba).